A 648-amino-acid polypeptide reads, in one-letter code: Cell surface glycoprotein MUC18 (648 aa).

An N-terminal signal peptide occupies residues Met-1 to Gly-23. Ig-like V-type domains are found at residues Val-24–Glu-131 and Pro-141–Thr-244. Residues Val-24 to Val-563 lie on the Extracellular side of the membrane. Disulfide bonds link Cys-50–Cys-118, Cys-163–Cys-225, Cys-274–Cys-322, Cys-367–Cys-409, and Cys-454–Cys-501. Residue Asn-58 is glycosylated (N-linked (GlcNAc...) asparagine). 3 consecutive Ig-like C2-type domains span residues Pro-246 to Thr-332, Pro-337 to Ser-426, and Ser-432 to Thr-512. The interval Gln-281–Asn-304 is disordered. Residue Asn-510 is glycosylated (N-linked (GlcNAc...) asparagine). Residues Thr-532–Ser-549 show a composition bias toward polar residues. A disordered region spans residues Thr-532 to Leu-554. Residues Ile-564–Phe-584 traverse the membrane as a helical segment. The Cytoplasmic portion of the chain corresponds to Tyr-585–His-648. Phosphoserine is present on residues Ser-608 and Ser-616. The interval Leu-625–His-648 is disordered. Positions Gly-631 to His-648 are enriched in basic and acidic residues.

In terms of tissue distribution, detected in melanoma cell lines.

It is found in the membrane. Functionally, plays a role in cell adhesion, and in cohesion of the endothelial monolayer at intercellular junctions in vascular tissue. Its expression may allow melanoma cells to interact with cellular elements of the vascular system, thereby enhancing hematogeneous tumor spread. Could be an adhesion molecule active in neural crest cells during embryonic development. Acts as a surface receptor that triggers tyrosine phosphorylation of FYN and PTK2/FAK1, and a transient increase in the intracellular calcium concentration. The sequence is that of Cell surface glycoprotein MUC18 (Mcam) from Mus musculus (Mouse).